We begin with the raw amino-acid sequence, 427 residues long: Gamma-glutamyl phosphate reductase (427 aa).

The protein belongs to the gamma-glutamyl phosphate reductase family.

Its subcellular location is the cytoplasm. The catalysed reaction is L-glutamate 5-semialdehyde + phosphate + NADP(+) = L-glutamyl 5-phosphate + NADPH + H(+). It participates in amino-acid biosynthesis; L-proline biosynthesis; L-glutamate 5-semialdehyde from L-glutamate: step 2/2. Its function is as follows. Catalyzes the NADPH-dependent reduction of L-glutamate 5-phosphate into L-glutamate 5-semialdehyde and phosphate. The product spontaneously undergoes cyclization to form 1-pyrroline-5-carboxylate. The polypeptide is Gamma-glutamyl phosphate reductase (Brucella ovis (strain ATCC 25840 / 63/290 / NCTC 10512)).